Here is a 282-residue protein sequence, read N- to C-terminus: Malonyl-[acyl-carrier protein] O-methyltransferase 1 (282 aa).

The protein belongs to the methyltransferase superfamily.

It catalyses the reaction malonyl-[ACP] + S-adenosyl-L-methionine = malonyl-[ACP] methyl ester + S-adenosyl-L-homocysteine. Its pathway is cofactor biosynthesis; biotin biosynthesis. Converts the free carboxyl group of a malonyl-thioester to its methyl ester by transfer of a methyl group from S-adenosyl-L-methionine (SAM). It allows to synthesize pimeloyl-ACP via the fatty acid synthetic pathway. The chain is Malonyl-[acyl-carrier protein] O-methyltransferase 1 from Coxiella burnetii (strain RSA 493 / Nine Mile phase I).